The chain runs to 642 residues: Threonine--tRNA ligase (642 aa).

Residues 1–61 enclose the TGS domain; the sequence is MPVITLPDGS…ETDAELSIIT (61 aa). A catalytic region spans residues 243 to 534; that stretch reads DHRKIGKQLD…LIEEYAGRFP (292 aa). Zn(2+) is bound by residues Cys-334, His-385, and His-511.

Belongs to the class-II aminoacyl-tRNA synthetase family. Homodimer. Zn(2+) is required as a cofactor.

It is found in the cytoplasm. The catalysed reaction is tRNA(Thr) + L-threonine + ATP = L-threonyl-tRNA(Thr) + AMP + diphosphate + H(+). Catalyzes the attachment of threonine to tRNA(Thr) in a two-step reaction: L-threonine is first activated by ATP to form Thr-AMP and then transferred to the acceptor end of tRNA(Thr). Also edits incorrectly charged L-seryl-tRNA(Thr). This is Threonine--tRNA ligase from Shewanella oneidensis (strain ATCC 700550 / JCM 31522 / CIP 106686 / LMG 19005 / NCIMB 14063 / MR-1).